A 373-amino-acid polypeptide reads, in one-letter code: Chaperone protein DnaJ (373 aa).

Residues 4–69 (NYYEILEISQ…EKRSIYDRYG (66 aa)) enclose the J domain. Residues 133–210 (GCKKKIDFSY…CHGNGYEEIK (78 aa)) form a CR-type zinc finger. Zn(2+) is bound by residues C146, C149, C162, C165, C184, C187, C198, and C201. CXXCXGXG motif repeat units follow at residues 146-153 (CKSCKGSG), 162-169 (CPHCGGKG), 184-191 (CDHCKGSG), and 198-205 (CKTCHGNG).

It belongs to the DnaJ family. In terms of assembly, homodimer. Requires Zn(2+) as cofactor.

It localises to the cytoplasm. Functionally, participates actively in the response to hyperosmotic and heat shock by preventing the aggregation of stress-denatured proteins and by disaggregating proteins, also in an autonomous, DnaK-independent fashion. Unfolded proteins bind initially to DnaJ; upon interaction with the DnaJ-bound protein, DnaK hydrolyzes its bound ATP, resulting in the formation of a stable complex. GrpE releases ADP from DnaK; ATP binding to DnaK triggers the release of the substrate protein, thus completing the reaction cycle. Several rounds of ATP-dependent interactions between DnaJ, DnaK and GrpE are required for fully efficient folding. Also involved, together with DnaK and GrpE, in the DNA replication of plasmids through activation of initiation proteins. This chain is Chaperone protein DnaJ, found in Campylobacter lari (strain RM2100 / D67 / ATCC BAA-1060).